Here is a 621-residue protein sequence, read N- to C-terminus: Kininogen-1 (621 aa).

The N-terminal stretch at 1-18 (MKLITILFLCSRLLPSLT) is a signal peptide. A Cystatin kininogen-type 1 domain is found at 27-131 (CNDQDVFKAV…IQTCLITPAE (105 aa)). 9 disulfides stabilise this stretch: Cys27–Cys591, Cys82–Cys93, Cys106–Cys125, Cys141–Cys144, Cys205–Cys217, Cys228–Cys247, Cys263–Cys266, Cys327–Cys339, and Cys350–Cys369. Asn47 and Asn87 each carry an N-linked (GlcNAc...) asparagine glycan. Thr136 carries O-linked (GalNAc...) threonine; partial glycosylation. The region spanning 150–253 (TKSPDLEPVL…SQKCDLYPVK (104 aa)) is the Cystatin kininogen-type 2 domain. 2 N-linked (GlcNAc...) asparagine glycosylation sites follow: Asn168 and Asn169. A glycan (N-linked (GlcNAc...) asparagine; partial) is linked at Asn197. Asn204 is a glycosylation site (N-linked (GlcNAc...) asparagine). Residues 272-375 (VDSPDLEEPL…TVNCQPLGQT (104 aa)) form the Cystatin kininogen-type 3 domain. Position 331 is a phosphoserine (Ser331). The tract at residues 396–497 (EGSTTVSLPH…GKNNGKHYDW (102 aa)) is disordered. O-linked (GalNAc...) serine glycosylation is present at Ser398. Thr399 and Thr400 each carry an O-linked (GalNAc...) threonine glycan. O-linked (GalNAc...) serine glycosylation occurs at Ser406. Basic residues predominate over residues 444-492 (GHKHKHDQGHGHHGSHGLGHGHQKQHGLGHGHKHGHGHGKHKNKGKNNG). An O-linked (GalNAc...) serine glycan is attached at Ser512. 6 O-linked (GalNAc...) threonine glycosylation sites follow: Thr520, Thr524, Thr536, Thr548, Thr553, and Thr570. A glycan (O-linked (GalNAc...) serine) is linked at Ser581.

Bradykinin is released from kininogen by plasma kallikrein. Post-translationally, phosphorylated by FAM20C in the extracellular medium. In terms of processing, bradykinin is inactivated by ACE, which removes the dipeptide Arg-Phe from its C-terminus. In terms of tissue distribution, plasma.

It is found in the secreted. The protein resides in the extracellular space. Its function is as follows. Kininogens are inhibitors of thiol proteases. HMW-kininogen plays an important role in blood coagulation by helping to position optimally prekallikrein and factor XI next to factor XII; HMW-kininogen inhibits the thrombin- and plasmin-induced aggregation of thrombocytes. LMW-kininogen inhibits the aggregation of thrombocytes. LMW-kininogen is in contrast to HMW-kininogen not involved in blood clotting. Functionally, the active peptide bradykinin is a potent vasodilatator that is released from HMW-kininogen shows a variety of physiological effects: (A) influence in smooth muscle contraction, (B) induction of hypotension, (C) natriuresis and diuresis, (D) decrease in blood glucose level, (E) it is a mediator of inflammation and causes (E1) increase in vascular permeability, (E2) stimulation of nociceptors (4E3) release of other mediators of inflammation (e.g. prostaglandins), (F) it has a cardioprotective effect (directly via bradykinin action, indirectly via endothelium-derived relaxing factor action). This is Kininogen-1 (KNG1) from Bos taurus (Bovine).